Reading from the N-terminus, the 179-residue chain is Large ribosomal subunit protein uL10 (179 aa).

This sequence belongs to the universal ribosomal protein uL10 family. As to quaternary structure, part of the ribosomal stalk of the 50S ribosomal subunit. The N-terminus interacts with L11 and the large rRNA to form the base of the stalk. The C-terminus forms an elongated spine to which L12 dimers bind in a sequential fashion forming a multimeric L10(L12)X complex.

Its function is as follows. Forms part of the ribosomal stalk, playing a central role in the interaction of the ribosome with GTP-bound translation factors. The protein is Large ribosomal subunit protein uL10 of Thermomicrobium roseum (strain ATCC 27502 / DSM 5159 / P-2).